The chain runs to 142 residues: Neurofilament heavy polypeptide (142 aa).

An IF rod domain is found at 1 to 142; sequence MRGAVLRLGA…EAAKVNTDAM (142 aa). The stretch at 26–74 forms a coiled coil; sequence IAHVRQRLDDEARQRQEAEAAARALARFAQEAEAARVELQKKAQALQEE.

The protein belongs to the intermediate filament family. Forms heterodimers with NEFL; which can further hetero-oligomerize (in vitro). Forms heterodimers with INA (in vitro). There are a number of repeats of the tripeptide K-S-P, NFH is phosphorylated on a number of the serines in this motif. It is thought that phosphorylation of NFH results in the formation of interfilament cross bridges that are important in the maintenance of axonal caliber. Post-translationally, phosphorylation seems to play a major role in the functioning of the larger neurofilament polypeptides (NF-M and NF-H), the levels of phosphorylation being altered developmentally and coincidentally with a change in the neurofilament function. In terms of processing, phosphorylated in the head and rod regions by the PKC kinase PKN1, leading to the inhibition of polymerization.

The protein resides in the cytoplasm. Its subcellular location is the cytoskeleton. The protein localises to the cell projection. It localises to the axon. Functionally, neurofilaments usually contain three intermediate filament proteins: NEFL, NEFM, and NEFH which are involved in the maintenance of neuronal caliber. NEFH has an important function in mature axons that is not subserved by the two smaller NF proteins. May additionally cooperate with the neuronal intermediate filament proteins PRPH and INA to form neuronal filamentous networks. The chain is Neurofilament heavy polypeptide (NEFH) from Sus scrofa (Pig).